The sequence spans 72 residues: Large ribosomal subunit protein bL31 (72 aa).

Zn(2+) contacts are provided by Cys16, Cys18, Cys38, and Cys41.

It belongs to the bacterial ribosomal protein bL31 family. Type A subfamily. Part of the 50S ribosomal subunit. The cofactor is Zn(2+).

Binds the 23S rRNA. This is Large ribosomal subunit protein bL31 from Vibrio campbellii (strain ATCC BAA-1116).